We begin with the raw amino-acid sequence, 826 residues long: Arsenite oxidase subunit AioA (826 aa).

[3Fe-4S] cluster is bound by residues Cys22, Cys25, and Cys29. His196, Glu204, Arg419, and His423 together coordinate substrate.

It belongs to the prokaryotic molybdopterin-containing oxidoreductase family. Heterodimer consisting of a large and a small subunit. It depends on [3Fe-4S] cluster as a cofactor. Requires Mo-bis(molybdopterin guanine dinucleotide) as cofactor.

The enzyme catalyses 2 oxidized [azurin] + arsenite + H2O = 2 reduced [azurin] + arsenate + 3 H(+). Functionally, involved in the detoxification of arsenic. Oxidizes As(III)O3(3-) (arsenite) to the somewhat less toxic As(V)O4(3-) (arsenate). The protein is Arsenite oxidase subunit AioA (aioA) of Herminiimonas arsenicoxydans.